The following is a 664-amino-acid chain: Fructose-1,6-bisphosphatase class 3 (664 aa).

This sequence belongs to the FBPase class 3 family. Mn(2+) is required as a cofactor.

It catalyses the reaction beta-D-fructose 1,6-bisphosphate + H2O = beta-D-fructose 6-phosphate + phosphate. The protein operates within carbohydrate biosynthesis; gluconeogenesis. The sequence is that of Fructose-1,6-bisphosphatase class 3 from Bacteroides thetaiotaomicron (strain ATCC 29148 / DSM 2079 / JCM 5827 / CCUG 10774 / NCTC 10582 / VPI-5482 / E50).